A 311-amino-acid chain; its full sequence is Methionyl-tRNA formyltransferase (311 aa).

Serine 110–proline 113 is a binding site for (6S)-5,6,7,8-tetrahydrofolate.

It belongs to the Fmt family.

It catalyses the reaction L-methionyl-tRNA(fMet) + (6R)-10-formyltetrahydrofolate = N-formyl-L-methionyl-tRNA(fMet) + (6S)-5,6,7,8-tetrahydrofolate + H(+). Attaches a formyl group to the free amino group of methionyl-tRNA(fMet). The formyl group appears to play a dual role in the initiator identity of N-formylmethionyl-tRNA by promoting its recognition by IF2 and preventing the misappropriation of this tRNA by the elongation apparatus. This chain is Methionyl-tRNA formyltransferase, found in Streptococcus pneumoniae (strain Taiwan19F-14).